Reading from the N-terminus, the 176-residue chain is Large ribosomal subunit protein uL16 (176 aa).

It belongs to the universal ribosomal protein uL16 family.

The polypeptide is Large ribosomal subunit protein uL16 (Halobacterium salinarum (strain ATCC 29341 / DSM 671 / R1)).